The following is a 450-amino-acid chain: NADP-specific glutamate dehydrogenase (450 aa).

Residue K111 is part of the active site.

The protein belongs to the Glu/Leu/Phe/Val dehydrogenases family. As to quaternary structure, homohexamer.

It catalyses the reaction L-glutamate + NADP(+) + H2O = 2-oxoglutarate + NH4(+) + NADPH + H(+). The polypeptide is NADP-specific glutamate dehydrogenase (GDHA) (Laccaria bicolor (strain S238N-H82 / ATCC MYA-4686) (Bicoloured deceiver)).